The chain runs to 295 residues: Indole-3-glycerol phosphate synthase (295 aa).

This sequence belongs to the TrpC family.

It carries out the reaction 1-(2-carboxyphenylamino)-1-deoxy-D-ribulose 5-phosphate + H(+) = (1S,2R)-1-C-(indol-3-yl)glycerol 3-phosphate + CO2 + H2O. Its pathway is amino-acid biosynthesis; L-tryptophan biosynthesis; L-tryptophan from chorismate: step 4/5. This Prochlorococcus marinus (strain MIT 9211) protein is Indole-3-glycerol phosphate synthase.